Here is a 250-residue protein sequence, read N- to C-terminus: Troponin I 1 (250 aa).

2 disordered regions span residues 1–59 (MSQI…ERKK) and 194–250 (SVFT…ADEE). Composition is skewed to basic and acidic residues over residues 21 to 45 (DAQR…EAGQ) and 206 to 221 (DKPE…KEES). Acidic residues predominate over residues 229-250 (PVEEEETAASEGEEEEEEADEE).

The protein belongs to the troponin I family. In terms of tissue distribution, strongly expressed in body wall muscle during embryogenesis, reduces during the larval stages to adult. In late-stage larvae and adults, expression is evident in the proximal gonad of both hermaphrodites and males.

Functionally, troponin I is the inhibitory subunit of troponin, the thin filament regulatory complex which confers calcium-sensitivity to muscle actomyosin ATPase activity. The chain is Troponin I 1 (tni-1) from Caenorhabditis elegans.